A 432-amino-acid polypeptide reads, in one-letter code: 3-phosphoshikimate 1-carboxyvinyltransferase (432 aa).

3-phosphoshikimate contacts are provided by lysine 23, serine 24, and arginine 28. Lysine 23 provides a ligand contact to phosphoenolpyruvate. Glycine 95 and arginine 123 together coordinate phosphoenolpyruvate. Positions 167, 169, 317, and 344 each coordinate 3-phosphoshikimate. Glutamine 169 serves as a coordination point for phosphoenolpyruvate. Aspartate 317 functions as the Proton acceptor in the catalytic mechanism. Residues arginine 348 and arginine 390 each contribute to the phosphoenolpyruvate site.

This sequence belongs to the EPSP synthase family. As to quaternary structure, monomer.

It is found in the cytoplasm. The enzyme catalyses 3-phosphoshikimate + phosphoenolpyruvate = 5-O-(1-carboxyvinyl)-3-phosphoshikimate + phosphate. Its pathway is metabolic intermediate biosynthesis; chorismate biosynthesis; chorismate from D-erythrose 4-phosphate and phosphoenolpyruvate: step 6/7. Functionally, catalyzes the transfer of the enolpyruvyl moiety of phosphoenolpyruvate (PEP) to the 5-hydroxyl of shikimate-3-phosphate (S3P) to produce enolpyruvyl shikimate-3-phosphate and inorganic phosphate. The polypeptide is 3-phosphoshikimate 1-carboxyvinyltransferase (Staphylococcus aureus (strain COL)).